Reading from the N-terminus, the 333-residue chain is MIDITLPLTDIHRHLDGNIRAQTILDLGRQFNIALPAQTLETLIPHVQVTSTEPDLVSFLTKLDWGVKVLASLDACRRVAFENIEDAARNGLHYVELRFSPGYMAMAHQLPIAGVVEAVIDGVRDGCNTFGVEARLIGIMSRTFGEAACLQELDALLAHRENITALDLAGDELGFPGSLFLSHFNRARDAGWHITVHAGEAAGPESIWQAIRELGAERIGHGVKAVEDRALMDFLAQQRIGIESCLTSNIQTSTVASLADHPLKTFLEHGVLASLNTDDPAVQGVDIIHEYHVAAPAAGLSREQIRQAQINGLEIAFLSDSEKRALREKVAEA.

Histidine 12 and histidine 14 together coordinate Zn(2+). Positions 14 and 16 each coordinate substrate. Residues 14–16 (HLD), serine 141, and glycine 170 each bind pentostatin. Glycine 170 is a substrate binding site. Histidine 197 contributes to the Zn(2+) binding site. Positions 200, 221, and 278 each coordinate pentostatin. Glutamate 200 (proton donor) is an active-site residue. Aspartate 278 contributes to the Zn(2+) binding site. Residue aspartate 279 participates in substrate binding.

This sequence belongs to the metallo-dependent hydrolases superfamily. Adenosine and AMP deaminases family. Adenosine deaminase subfamily. Zn(2+) serves as cofactor.

The enzyme catalyses adenosine + H2O + H(+) = inosine + NH4(+). The catalysed reaction is 2'-deoxyadenosine + H2O + H(+) = 2'-deoxyinosine + NH4(+). In terms of biological role, catalyzes the hydrolytic deamination of adenosine and 2-deoxyadenosine. The protein is Adenosine deaminase of Salmonella typhimurium (strain LT2 / SGSC1412 / ATCC 700720).